The chain runs to 288 residues: ATP synthase gamma chain (288 aa).

This sequence belongs to the ATPase gamma chain family. As to quaternary structure, F-type ATPases have 2 components, CF(1) - the catalytic core - and CF(0) - the membrane proton channel. CF(1) has five subunits: alpha(3), beta(3), gamma(1), delta(1), epsilon(1). CF(0) has three main subunits: a, b and c.

The protein resides in the cell inner membrane. In terms of biological role, produces ATP from ADP in the presence of a proton gradient across the membrane. The gamma chain is believed to be important in regulating ATPase activity and the flow of protons through the CF(0) complex. The polypeptide is ATP synthase gamma chain (Blochmanniella pennsylvanica (strain BPEN)).